Reading from the N-terminus, the 2233-residue chain is Acetyl-CoA carboxylase (2233 aa).

S2 bears the N-acetylserine mark. Phosphoserine is present on S2. Residues 58 to 567 (VISKILIANN…TTGWLDDLIT (510 aa)) enclose the Biotin carboxylation domain. The region spanning 216–408 (KTGLVSVDDD…LPAAQLQIAM (193 aa)) is the ATP-grasp domain. 256-261 (GGGGKG) serves as a coordination point for ATP. Residues E365, E379, and N381 each coordinate Mn(2+). R383 is a catalytic residue. The Biotinyl-binding domain occupies 694–768 (LEVENDPTQL…VAGDIMAIMT (75 aa)). N6-biotinyllysine is present on K735. S790, S1148, S1157, and S1162 each carry phosphoserine. Positions 1486-1822 (PYPVKEWLQP…KRNMPVPILE (337 aa)) constitute a CoA carboxyltransferase N-terminal domain. The tract at residues 1486–2141 (PYPVKEWLQP…EEYLIKRLSH (656 aa)) is carboxyltransferase. 1627–1629 (ARI) lines the acetyl-CoA pocket. R1731 contributes to the CoA binding site. Positions 1826–2141 (TWDRPVDFTP…EEYLIKRLSH (316 aa)) constitute a CoA carboxyltransferase C-terminal domain. G1998 contributes to the acetyl-CoA binding site. The CoA site is built by K2034 and R2036.

Homodimer. Biotin serves as cofactor. Requires Mn(2+) as cofactor.

It is found in the cytoplasm. It localises to the endoplasmic reticulum membrane. The catalysed reaction is hydrogencarbonate + acetyl-CoA + ATP = malonyl-CoA + ADP + phosphate + H(+). It catalyses the reaction N(6)-biotinyl-L-lysyl-[protein] + hydrogencarbonate + ATP = N(6)-carboxybiotinyl-L-lysyl-[protein] + ADP + phosphate + H(+). It participates in lipid metabolism; malonyl-CoA biosynthesis; malonyl-CoA from acetyl-CoA: step 1/1. By phosphorylation. The catalytic activity is inhibited by soraphen A, a polyketide isolated from the myxobacterium Sorangium cellulosum and a potent inhibitor of fungal growth. Its function is as follows. Carries out three functions: biotin carboxyl carrier protein, biotin carboxylase and carboxyltransferase. Involved in the synthesis of very-long-chain fatty acid synthesis which is required to maintain a functional nuclear envelope. Required for acylation and vacuolar membrane association of VAC8 which is necessary to maintain a normal morphology of the vacuole. This Saccharomyces cerevisiae (strain ATCC 204508 / S288c) (Baker's yeast) protein is Acetyl-CoA carboxylase (ACC1).